The following is a 61-amino-acid chain: Protein translocase subunit SecE (61 aa).

Over 1–34 (MAELQERIRHFWKESRRAFLVTKKPNWATYKRAA) the chain is Cytoplasmic. Residues 35-55 (KITGLGIILIGLIGMLIRIVG) form a helical membrane-spanning segment. Over 56–61 (ILILGG) the chain is Extracellular.

Belongs to the SecE/SEC61-gamma family. In terms of assembly, component of the Sec protein translocase complex. Heterotrimer consisting of alpha (SecY), beta (SecG) and gamma (SecE) subunits. The heterotrimers can form oligomers, although 1 heterotrimer is thought to be able to translocate proteins. Interacts with the ribosome. May interact with SecDF, and other proteins may be involved.

The protein localises to the cell membrane. Its function is as follows. Essential subunit of the protein translocation channel SecYEG. Clamps together the 2 halves of SecY. May contact the channel plug during translocation. The chain is Protein translocase subunit SecE from Pyrococcus furiosus (strain ATCC 43587 / DSM 3638 / JCM 8422 / Vc1).